Consider the following 259-residue polypeptide: Hydroxyethylthiazole kinase (259 aa).

M37 contributes to the substrate binding site. The ATP site is built by R113 and T158. Residue G185 participates in substrate binding.

The protein belongs to the Thz kinase family. Mg(2+) serves as cofactor.

It carries out the reaction 5-(2-hydroxyethyl)-4-methylthiazole + ATP = 4-methyl-5-(2-phosphooxyethyl)-thiazole + ADP + H(+). The protein operates within cofactor biosynthesis; thiamine diphosphate biosynthesis; 4-methyl-5-(2-phosphoethyl)-thiazole from 5-(2-hydroxyethyl)-4-methylthiazole: step 1/1. Its function is as follows. Catalyzes the phosphorylation of the hydroxyl group of 4-methyl-5-beta-hydroxyethylthiazole (THZ). This Helicobacter pylori (strain Shi470) protein is Hydroxyethylthiazole kinase.